Here is a 118-residue protein sequence, read N- to C-terminus: MPRVKRGVTARARHKKVISAAKGFRGRRNNVYRIAKQAVMRAGQYAYRDRRNKKRVFRALWIARINAGAREHGLTYSKFMNGLKKASIELDRKVLSDMAIHDKVAFAAIVNQVKANVA.

It belongs to the bacterial ribosomal protein bL20 family.

Binds directly to 23S ribosomal RNA and is necessary for the in vitro assembly process of the 50S ribosomal subunit. It is not involved in the protein synthesizing functions of that subunit. In Ralstonia pickettii (strain 12J), this protein is Large ribosomal subunit protein bL20.